Here is a 311-residue protein sequence, read N- to C-terminus: Methionyl-tRNA formyltransferase (311 aa).

Position 110 to 113 (110 to 113) interacts with (6S)-5,6,7,8-tetrahydrofolate; that stretch reads SLLP.

The protein belongs to the Fmt family.

It carries out the reaction L-methionyl-tRNA(fMet) + (6R)-10-formyltetrahydrofolate = N-formyl-L-methionyl-tRNA(fMet) + (6S)-5,6,7,8-tetrahydrofolate + H(+). In terms of biological role, attaches a formyl group to the free amino group of methionyl-tRNA(fMet). The formyl group appears to play a dual role in the initiator identity of N-formylmethionyl-tRNA by promoting its recognition by IF2 and preventing the misappropriation of this tRNA by the elongation apparatus. In Streptococcus pyogenes serotype M28 (strain MGAS6180), this protein is Methionyl-tRNA formyltransferase.